A 662-amino-acid chain; its full sequence is Glycogen debranching enzyme (662 aa).

Asp-338 functions as the Nucleophile in the catalytic mechanism. Glu-373 functions as the Proton donor in the catalytic mechanism.

This sequence belongs to the glycosyl hydrolase 13 family.

It catalyses the reaction Hydrolysis of (1-&gt;6)-alpha-D-glucosidic linkages to branches with degrees of polymerization of three or four glucose residues in limit dextrin.. Its pathway is glycan degradation; glycogen degradation. Its function is as follows. Removes maltotriose and maltotetraose chains that are attached by 1,6-alpha-linkage to the limit dextrin main chain, generating a debranched limit dextrin. This chain is Glycogen debranching enzyme, found in Yersinia pestis.